The following is a 264-amino-acid chain: Apolipoprotein A-I (264 aa).

Residues M1 to A18 form the signal peptide. A run of 2 repeats spans residues L67–G88 and H89–N110. Residues L67–Q264 are 10 X approximate tandem repeats. Position 109 is a methionine sulfoxide (M109). Residues K111–Q121 form a 3; half-length repeat. 3 consecutive repeat copies span residues P122–E143, P144–G165, and P166–R187. The 7; truncated repeat unit spans residues T188–S207. A Methionine sulfoxide modification is found at M193. Repeat 8 spans residues T208–K229. One copy of the 9; half-length repeat lies at P230 to L240. Repeat 10 spans residues P241–Q264.

Belongs to the apolipoprotein A1/A4/E family. In terms of assembly, homodimer. Interacts with APOA1BP and CLU. Component of a sperm activating protein complex (SPAP), consisting of APOA1, an immunoglobulin heavy chain, an immunoglobulin light chain and albumin. Interacts with NDRG1. Interacts with SCGB3A2. Interacts with NAXE and YJEFN3. In terms of processing, glycosylated. Palmitoylated. Post-translationally, phosphorylation sites are present in the extracellular medium.

It is found in the secreted. Functionally, participates in the reverse transport of cholesterol from tissues to the liver for excretion by promoting cholesterol efflux from tissues and by acting as a cofactor for the lecithin cholesterol acyltransferase (LCAT). As part of the SPAP complex, activates spermatozoa motility. This chain is Apolipoprotein A-I (Apoa1), found in Fukomys damarensis (Damaraland mole rat).